Consider the following 178-residue polypeptide: Conodipine-P3 (178 aa).

The signal sequence occupies residues 1 to 24 (MKLLAPVLWAMAALGVTWLVAVDS). A 4-hydroxyproline modification is found at Pro38. 4-hydroxyproline; partial occurs at positions 42 and 49. His54 is an active-site residue. Residues 98–130 (KREVTSHRATSIAHSRLWKTALDQKSFLNRKAR) constitute a propeptide, interchain peptide. Gln131 is modified (pyrrolidone carboxylic acid). Pro137 carries the post-translational modification 4-hydroxyproline; partial.

Belongs to the phospholipase A2 family. Group IX subfamily. In terms of assembly, heterodimer of an alpha and a beta chain; probably disulfide-linked. The cofactor is Ca(2+). In terms of tissue distribution, expressed by the venom duct.

It is found in the secreted. It catalyses the reaction a 1,2-diacyl-sn-glycero-3-phosphocholine + H2O = a 1-acyl-sn-glycero-3-phosphocholine + a fatty acid + H(+). Catalyzes the calcium-dependent hydrolysis of the 2-acyl groups in 3-sn-phosphoglycerides. The protein is Conodipine-P3 of Conus purpurascens (Purple cone).